The primary structure comprises 987 residues: Ras guanine nucleotide exchange factor efc25 (987 aa).

Residues 1 to 10 (MRRPNLDRLR) are compositionally biased toward basic and acidic residues. Disordered stretches follow at residues 1 to 50 (MRRP…STMS), 100 to 130 (FSSTHSLTRQPSPRSPLTPLKGNTRASPEIR), and 529 to 552 (NANTAKDDEPARQTNKGTTRISRS). Residues 19–39 (TSVSKPSTPSYSTYSLSPTFS) show a composition bias toward low complexity. Composition is skewed to polar residues over residues 40 to 50 (DKSVLSPSTMS), 102 to 111 (STHSLTRQPS), and 540 to 552 (RQTNKGTTRISRS). Serine 552 is modified (phosphoserine). Residues 590–723 (SDNNVKGGTL…VILSEIDNLW (134 aa)) enclose the N-terminal Ras-GEF domain. The 234-residue stretch at 752–985 (TPEEFASQMT…FDKSLSLEPR (234 aa)) folds into the Ras-GEF domain.

The protein resides in the cytoplasm. Its function is as follows. Has a role in chromosome segregation and cell morphology upstream of the ras1-scd1 pathway. Promotes the exchange of ras1-bound GDP by GTP leading to its activation. The sequence is that of Ras guanine nucleotide exchange factor efc25 (efc25) from Schizosaccharomyces pombe (strain 972 / ATCC 24843) (Fission yeast).